A 502-amino-acid polypeptide reads, in one-letter code: Reduced meiotic recombination protein C1442.04c (502 aa).

A phosphoserine mark is found at Ser-328, Ser-330, and Ser-331. Disordered regions lie at residues 353-391, 420-440, and 454-502; these read NDLNNEEPNSVVAEDGSEIITLDENDQSPNEATEKLRDN, GSLNNADLSQEPITNDGENVD, and ESAF…PSDD. Over residues 367 to 378 the composition is skewed to acidic residues; it reads DGSEIITLDEND. Polar residues-rich tracts occupy residues 420 to 436 and 462 to 477; these read GSLNNADLSQEPITNDG and GTINSSKRRLSVTTDT.

Belongs to the RMR1 family.

The protein resides in the cytoplasm. It is found in the nucleus. In terms of biological role, required for normal levels of gene conversion events during meiosis. This is Reduced meiotic recombination protein C1442.04c from Schizosaccharomyces pombe (strain 972 / ATCC 24843) (Fission yeast).